The primary structure comprises 523 residues: Spastin (523 aa).

Residues 1-41 (MLDKLSKHKTMFYERVKEIDQILFSQQQAKQTQLDNLSNNN) are Cytoplasmic-facing. An intramembrane region (helical) is located at residues 42-58 (ASGGFFSGFMKMFSPLS). 3 stretches are compositionally biased toward low complexity: residues 57–71 (LSTPPNSSSNNNSNT), 171–184 (QQPPQQSSQQQQQP), and 193–210 (TALRNTTSATSSTTTANN). Disordered regions lie at residues 57–77 (LSTPPNSSSNNNSNTQQAISQ) and 129–218 (GISS…LDQI). The Cytoplasmic portion of the chain corresponds to 59 to 523 (TPPNSSSNNN…ESYGTFAKGI (465 aa)).

This sequence belongs to the AAA ATPase family. Spastin subfamily. As to quaternary structure, homohexamer. The homohexamer is stabilized by ATP-binding. The homohexamer may adopt a ring conformation through which microtubules pass prior to being severed.

The protein localises to the membrane. It carries out the reaction n ATP + n H2O + a microtubule = n ADP + n phosphate + (n+1) alpha/beta tubulin heterodimers.. In terms of biological role, ATP-dependent microtubule severing protein. Stimulates microtubule minus-end depolymerization and poleward microtubule flux in the mitotic spindle. The sequence is that of Spastin from Naegleria gruberi (Amoeba).